The chain runs to 801 residues: Mitochondrial intermediate peptidase (801 aa).

A mitochondrion-targeting transit peptide spans 1-41 (MKPQLLTPLRRRPWTCRQCLQRLQRLQQQTRRSFETAASPA). Residues 31–54 (RRSFETAASPAPGHTQVDYIPADA) are disordered. A Zn(2+)-binding site is contributed by H565. The active site involves E566. Positions 569 and 572 each coordinate Zn(2+).

It belongs to the peptidase M3 family. Requires Zn(2+) as cofactor.

The protein resides in the mitochondrion matrix. The catalysed reaction is Release of an N-terminal octapeptide as second stage of processing of some proteins imported into the mitochondrion.. Cleaves proteins, imported into the mitochondrion, to their mature size. While most mitochondrial precursor proteins are processed to the mature form in one step by mitochondrial processing peptidase (MPP), the sequential cleavage by MIP of an octapeptide after initial processing by MPP is a required step for a subgroup of nuclear-encoded precursor proteins destined for the matrix or the inner membrane. The protein is Mitochondrial intermediate peptidase (oct1) of Aspergillus clavatus (strain ATCC 1007 / CBS 513.65 / DSM 816 / NCTC 3887 / NRRL 1 / QM 1276 / 107).